The sequence spans 141 residues: Large ribosomal subunit protein uL11 (141 aa).

A disordered region spans residues 1–23 (MAKQVTGQAKFQVPGGQATPAPP).

It belongs to the universal ribosomal protein uL11 family. As to quaternary structure, part of the ribosomal stalk of the 50S ribosomal subunit. Interacts with L10 and the large rRNA to form the base of the stalk. L10 forms an elongated spine to which L12 dimers bind in a sequential fashion forming a multimeric L10(L12)X complex. Post-translationally, one or more lysine residues are methylated.

Its function is as follows. Forms part of the ribosomal stalk which helps the ribosome interact with GTP-bound translation factors. The chain is Large ribosomal subunit protein uL11 from Rhodopirellula baltica (strain DSM 10527 / NCIMB 13988 / SH1).